Reading from the N-terminus, the 192-residue chain is Thymidine kinase (192 aa).

Residues 9–16 (STMNAGKS) and 87–90 (DEAQ) contribute to the ATP site. The active-site Proton acceptor is glutamate 88. Positions 145, 147, 182, and 185 each coordinate Zn(2+).

Belongs to the thymidine kinase family. In terms of assembly, homotetramer.

The protein localises to the cytoplasm. It carries out the reaction thymidine + ATP = dTMP + ADP + H(+). This Pasteurella multocida (strain Pm70) protein is Thymidine kinase.